The following is a 208-amino-acid chain: Golgi apparatus membrane protein TVP23 homolog B (208 aa).

N-acetylmethionine is present on Met1. Acidic residues predominate over residues 1–21 (MLQQDSNDDTEDVSLFDAEEE). The disordered stretch occupies residues 1–27 (MLQQDSNDDTEDVSLFDAEEETTNRPK). 4 helical membrane-spanning segments follow: residues 34 to 53 (PVAS…VYLL), 54 to 72 (CELF…ILLL), 126 to 146 (IFWL…FSAL), and 152 to 172 (KWLA…YGYI).

Belongs to the TVP23 family.

It is found in the membrane. This chain is Golgi apparatus membrane protein TVP23 homolog B (TVP23B), found in Bos taurus (Bovine).